The chain runs to 609 residues: MPDYRSKTSTHGRNMAGARGLWRATGMKDEDFGKPIIAVVNSFTQFVPGHVHLKDLGQLVAAEIQAAGGVAKEFNTIAVDDGIAMGHDGMLYSLPSRDLIADSVEYMVNAHCADAMVCISNCDKITPGMLMAAMRLNIPVVFVSGGPMEAGKVKFRGDEKAIDLVDAMVVAADDSYTDEEVAEFERSACPTCGSCSGMFTANSMNCLTEALGLSLPGNGSIVATHANRKKLFLKAGQLIVELAKRYYEQNDASILPRSIATKAAFKNAMTLDIAMGGSTNTVLHLLAAANEAEVDFTMDDIDELSRRVPVLSKVAPAKQDVHMEDVHRAGGIMAILGELDRANLLDVSVPTVHEKTLKDALDKWDIIRTEDPEVYEFYRSSPGGVPTQVAFSQNRYYSTLDGDREKGVIRNAEHAFSKDGGLAVLYGNIALDGCIVKTAGVDESILKFTGTARVFESQDAAVEAILGNEIKAGDVVVIRYEGPRGGPGMQEMLYPTSYLKSKGLGKDCALVTDGRFSGGSSGLSIGHVSPEAAEGGAIGLVEDGDTIEIDIPNRTIHLNIDDATMAHRRTVQEAKGWHPKEERKRKVSKALKVYAMHTTSAAKGAVRVL.

Residue Asp81 participates in Mg(2+) binding. A [2Fe-2S] cluster-binding site is contributed by Cys122. Asp123 and Lys124 together coordinate Mg(2+). Position 124 is an N6-carboxylysine (Lys124). Cys195 is a [2Fe-2S] cluster binding site. Glu491 provides a ligand contact to Mg(2+). The Proton acceptor role is filled by Ser517.

This sequence belongs to the IlvD/Edd family. In terms of assembly, homodimer. Requires [2Fe-2S] cluster as cofactor. The cofactor is Mg(2+).

It catalyses the reaction (2R)-2,3-dihydroxy-3-methylbutanoate = 3-methyl-2-oxobutanoate + H2O. The enzyme catalyses (2R,3R)-2,3-dihydroxy-3-methylpentanoate = (S)-3-methyl-2-oxopentanoate + H2O. Its pathway is amino-acid biosynthesis; L-isoleucine biosynthesis; L-isoleucine from 2-oxobutanoate: step 3/4. It functions in the pathway amino-acid biosynthesis; L-valine biosynthesis; L-valine from pyruvate: step 3/4. In terms of biological role, functions in the biosynthesis of branched-chain amino acids. Catalyzes the dehydration of (2R,3R)-2,3-dihydroxy-3-methylpentanoate (2,3-dihydroxy-3-methylvalerate) into 2-oxo-3-methylpentanoate (2-oxo-3-methylvalerate) and of (2R)-2,3-dihydroxy-3-methylbutanoate (2,3-dihydroxyisovalerate) into 2-oxo-3-methylbutanoate (2-oxoisovalerate), the penultimate precursor to L-isoleucine and L-valine, respectively. The protein is Dihydroxy-acid dehydratase of Acinetobacter baumannii (strain ACICU).